Consider the following 392-residue polypeptide: Chalcone synthase-like protein 1 (392 aa).

Cys-166 is a catalytic residue.

The protein belongs to the thiolase-like superfamily. Chalcone/stilbene synthases family. In terms of tissue distribution, expressed at the same level in leaves and in glandular trichomes.

It is found in the cytoplasm. Its function is as follows. Chalcone synthase that may use malonyl-CoA and hexanoyl-CoA as substrates but without producing olivetol or olivetolic acid. The chain is Chalcone synthase-like protein 1 (CAN383) from Cannabis sativa (Hemp).